The chain runs to 514 residues: MIKRALISVSDKTGIVEMARELQSMGVDIISTGGTAKTLSDAGIKVINISDVTGFPECLDGRVKTLHPKVHAGILAIRSNEEHMRQLKELNIETIDMVIINLYPFKQTILKENVDLSEAIENIDIGGPTMIRAAAKNYQDVVVIVDPSDYAAVLEELKTTKDVSLKTKFKLAYKVFEHTSHYDTLIAKYLREQIGEDEFPQTLSLTFEKVQDMRYGENPHQKAVFYKEVGANVGCITAAKQLHGKELSYNNINDANGAIEIIKEFDEPTVVAVKHANPCGVASASNIYDAYIKAYEADPVSIFGGIIAANREIDEKTAEEINKIFVEIVIAPSFTEGALKILTQKKNIRLLQLEDISAKIPKGTYDMKKVPGGLLVQNYNSELLNMDDLKVVTEKKPTQEELEDLIFAMKVVKHTKSNGIALAKGKQTIGVGPGQTNRVTACKIAIEYGGERTKGAVLASDAFFPFADCVEAAAAAGITAIIQPGGSIRDQESIDACNKYGIAMVFTGMRHFKH.

The MGS-like domain maps to 1–145 (MIKRALISVS…KNYQDVVVIV (145 aa)).

Belongs to the PurH family.

It carries out the reaction (6R)-10-formyltetrahydrofolate + 5-amino-1-(5-phospho-beta-D-ribosyl)imidazole-4-carboxamide = 5-formamido-1-(5-phospho-D-ribosyl)imidazole-4-carboxamide + (6S)-5,6,7,8-tetrahydrofolate. It catalyses the reaction IMP + H2O = 5-formamido-1-(5-phospho-D-ribosyl)imidazole-4-carboxamide. It participates in purine metabolism; IMP biosynthesis via de novo pathway; 5-formamido-1-(5-phospho-D-ribosyl)imidazole-4-carboxamide from 5-amino-1-(5-phospho-D-ribosyl)imidazole-4-carboxamide (10-formyl THF route): step 1/1. It functions in the pathway purine metabolism; IMP biosynthesis via de novo pathway; IMP from 5-formamido-1-(5-phospho-D-ribosyl)imidazole-4-carboxamide: step 1/1. This Acetivibrio thermocellus (strain ATCC 27405 / DSM 1237 / JCM 9322 / NBRC 103400 / NCIMB 10682 / NRRL B-4536 / VPI 7372) (Clostridium thermocellum) protein is Bifunctional purine biosynthesis protein PurH.